Reading from the N-terminus, the 822-residue chain is uncharacterized protein (822 aa).

The Cytoplasmic portion of the chain corresponds to 1 to 13; it reads MCHNSVRSGNKAG. Residues 14–34 traverse the membrane as a helical segment; the sequence is FLGIKFGSALLSIATGAIAIA. Topologically, residues 35 to 44 are extracellular; that stretch reads LLCKFHDHEA. Residues 45–65 traverse the membrane as a helical segment; sequence VLIVIVCSTLLYGIPSLISFI. The Cytoplasmic segment spans residues 66–76; that stretch reads TETVFAPSKFH. Residues 77–97 traverse the membrane as a helical segment; it reads IGYFYNVLNFALPLITMGCTV. Residues 98–120 are Extracellular-facing; sequence DYFHNTLRSPISVQSESHRVYIT. A helical transmembrane segment spans residues 121–141; it reads TLDSLLIFTLFINGIQLGFFL. Residues 142–822 lie on the Cytoplasmic side of the membrane; that stretch reads KDGNANNFGS…PVEELVSPSK (681 aa). The segment at 271–290 is disordered; sequence RNTQQATKVPTEKKSNHRSS. Position 690 is a phosphoserine (S690). Over residues 698-712 the composition is skewed to polar residues; sequence TLQSSHSPTKSTSGN. Disordered stretches follow at residues 698 to 728 and 751 to 783; these read TLQSSHSPTKSTSGNSRRDSLNNDRTQSTVN and NGEEPVLDTPQSIQSSSSGSEQESAGSGSGYPE. The segment covering 761–776 has biased composition (low complexity); that stretch reads QSIQSSSSGSEQESAG.

It localises to the membrane. This is an uncharacterized protein from Saccharomyces cerevisiae (strain ATCC 204508 / S288c) (Baker's yeast).